The following is a 769-amino-acid chain: 5-methyltetrahydropteroyltriglutamate--homocysteine methyltransferase (769 aa).

Residues 18 to 21 (RELK) and K127 contribute to the 5-methyltetrahydropteroyltri-L-glutamate site. L-homocysteine contacts are provided by residues 447-449 (IGS) and E500. L-methionine contacts are provided by residues 447-449 (IGS) and E500. 5-methyltetrahydropteroyltri-L-glutamate is bound by residues 531-532 (RC) and W577. D615 serves as a coordination point for L-homocysteine. D615 lines the L-methionine pocket. E621 provides a ligand contact to 5-methyltetrahydropteroyltri-L-glutamate. The Zn(2+) site is built by H657, C659, and E681. H710 functions as the Proton donor in the catalytic mechanism. Position 742 (C742) interacts with Zn(2+).

It belongs to the vitamin-B12 independent methionine synthase family. Requires Zn(2+) as cofactor.

It carries out the reaction 5-methyltetrahydropteroyltri-L-glutamate + L-homocysteine = tetrahydropteroyltri-L-glutamate + L-methionine. The protein operates within amino-acid biosynthesis; L-methionine biosynthesis via de novo pathway; L-methionine from L-homocysteine (MetE route): step 1/1. Catalyzes the transfer of a methyl group from 5-methyltetrahydrofolate to homocysteine resulting in methionine formation. This chain is 5-methyltetrahydropteroyltriglutamate--homocysteine methyltransferase, found in Chelativorans sp. (strain BNC1).